We begin with the raw amino-acid sequence, 441 residues long: MWFFKVGALLFLAALVSANNATTGPKVLCYYDGQMSLREGLGKITVTDIELALPFCTHLLYGFAGVNPETYRLKALDESLELDSGKGQYRLATTLKRRYPNLKVLLSVGGYKDLAEEKPFEKYLTLLESAGSRTAFVNSVYSTLKTYDFDGLDLAWQFPQTKPKRIRGWTGKVWHGFKKLFTGDSVLDPKADEHREEFTALVRDLKNALVADNFILGLTVLPHVNESIFMDVPLLKDNLDYVNLASFDQQTPERNPKEGDYTAPIYEPSERVEGNNVDAEASYWLKQGTPAGKIVIGIPTYGRGWKLVEKSGITGVPPIPADGPSIPGPHSGINGFYSWAEVCAKLPNPGNANLQGADQPLRKIGDPTRRFGAYAFRIPDENEEHGIWLSYEDPDTAGNKAAYVKAKGLGGISIFDLGNDDVRGACAGDKFPILRAAKYRL.

The N-terminal stretch at 1-18 is a signal peptide; that stretch reads MWFFKVGALLFLAALVSA. Asn20 carries N-linked (GlcNAc...) asparagine glycosylation. Positions 25-441 constitute a GH18 domain; it reads PKVLCYYDGQ…PILRAAKYRL (417 aa). A disulfide bridge connects residues Cys29 and Cys56. N-linked (GlcNAc...) asparagine glycosylation occurs at Asn225.

It belongs to the glycosyl hydrolase 18 family. IDGF subfamily. As to expression, salivary gland (at protein level).

The protein localises to the secreted. Its function is as follows. Promotes recruitment of host neutrophils at the bite site. Induces expression of IL1B and IL6 in the skin of the host. Functionally, (Microbial infection) Enhances Zika virus replication and exacerbates disease pathogenesis in the host. This Aedes aegypti (Yellowfever mosquito) protein is Bacteria-responsive protein 1.